Consider the following 224-residue polypeptide: Ribonuclease HII (224 aa).

The region spanning R36 to G224 is the RNase H type-2 domain. Residues D42, E43, and D138 each coordinate a divalent metal cation.

The protein belongs to the RNase HII family. Requires Mn(2+) as cofactor. The cofactor is Mg(2+).

It is found in the cytoplasm. The enzyme catalyses Endonucleolytic cleavage to 5'-phosphomonoester.. In terms of biological role, endonuclease that specifically degrades the RNA of RNA-DNA hybrids. The protein is Ribonuclease HII of Parasynechococcus marenigrum (strain WH8102).